A 334-amino-acid chain; its full sequence is Aspartate carbamoyltransferase catalytic subunit (334 aa).

Positions 71 and 72 each coordinate carbamoyl phosphate. Lysine 99 contacts L-aspartate. Carbamoyl phosphate contacts are provided by arginine 121, histidine 151, and glutamine 154. Positions 184 and 239 each coordinate L-aspartate. Carbamoyl phosphate-binding residues include glycine 280 and proline 281.

It belongs to the aspartate/ornithine carbamoyltransferase superfamily. ATCase family. In terms of assembly, heterododecamer (2C3:3R2) of six catalytic PyrB chains organized as two trimers (C3), and six regulatory PyrI chains organized as three dimers (R2).

The catalysed reaction is carbamoyl phosphate + L-aspartate = N-carbamoyl-L-aspartate + phosphate + H(+). It functions in the pathway pyrimidine metabolism; UMP biosynthesis via de novo pathway; (S)-dihydroorotate from bicarbonate: step 2/3. Its function is as follows. Catalyzes the condensation of carbamoyl phosphate and aspartate to form carbamoyl aspartate and inorganic phosphate, the committed step in the de novo pyrimidine nucleotide biosynthesis pathway. The chain is Aspartate carbamoyltransferase catalytic subunit from Pseudomonas fluorescens (strain Pf0-1).